We begin with the raw amino-acid sequence, 276 residues long: uncharacterized protein (276 aa).

The segment at 1-70 is disordered; that stretch reads MSKAKSPIKS…SDDDEEDSPN (70 aa). The span at 21-35 shows a compositional bias: basic and acidic residues; the sequence is VLREKKVKDAEKAEH. In terms of domain architecture, RRM spans 105-183; it reads GVLYVGRLPH…KLLQCKVIPE (79 aa). The segment at 249-276 is disordered; it reads VSHPKAASPVASKKSSKKKNKKVLAAHK. A compositionally biased stretch (low complexity) spans 252–261; it reads PKAASPVASK. Residues 262–276 show a composition bias toward basic residues; it reads KSSKKKNKKVLAAHK.

It localises to the nucleus. The protein localises to the nucleolus. This is an uncharacterized protein from Schizosaccharomyces pombe (strain 972 / ATCC 24843) (Fission yeast).